The chain runs to 353 residues: N6-methyladenosine RNA demethylase ALKB1 (353 aa).

The 130-residue stretch at 223 to 352 (IAQAAIVNFY…RINLNVRQMR (130 aa)) folds into the Fe2OG dioxygenase domain. Fe cation is bound by residues His-241, Asp-243, and His-308. Arg-343 lines the 2-oxoglutarate pocket.

Belongs to the alkB family. Requires Fe(2+) as cofactor.

It is found in the cytoplasm. Its subcellular location is the P-body. The catalysed reaction is an N(6)-methyladenosine in mRNA + 2-oxoglutarate + O2 = an adenosine in mRNA + formaldehyde + succinate + CO2. RNA demethylase that regulates the stability of mRNAs through an m(6)A-dependent manner. M6A is a modification present at internal sites of mRNAs and some non-coding RNAs and plays a role in mRNA stability and processing. Plays a role in pathogenicity towards plant host. The chain is N6-methyladenosine RNA demethylase ALKB1 from Pyricularia oryzae (strain 70-15 / ATCC MYA-4617 / FGSC 8958) (Rice blast fungus).